Here is a 468-residue protein sequence, read N- to C-terminus: ATP synthase subunit beta (468 aa).

An ATP-binding site is contributed by 155-162 (GGAGVGKT).

It belongs to the ATPase alpha/beta chains family. As to quaternary structure, F-type ATPases have 2 components, CF(1) - the catalytic core - and CF(0) - the membrane proton channel. CF(1) has five subunits: alpha(3), beta(3), gamma(1), delta(1), epsilon(1). CF(0) has three main subunits: a(1), b(2) and c(9-12). The alpha and beta chains form an alternating ring which encloses part of the gamma chain. CF(1) is attached to CF(0) by a central stalk formed by the gamma and epsilon chains, while a peripheral stalk is formed by the delta and b chains.

The protein resides in the cell membrane. The catalysed reaction is ATP + H2O + 4 H(+)(in) = ADP + phosphate + 5 H(+)(out). Functionally, produces ATP from ADP in the presence of a proton gradient across the membrane. The catalytic sites are hosted primarily by the beta subunits. The chain is ATP synthase subunit beta from Bacillus cereus (strain ATCC 10987 / NRS 248).